The chain runs to 593 residues: Arginine--tRNA ligase (593 aa).

A 'HIGH' region motif is present at residues 138 to 148 (ANPTGPLHVGH).

Belongs to the class-I aminoacyl-tRNA synthetase family. As to quaternary structure, monomer.

The protein resides in the cytoplasm. The catalysed reaction is tRNA(Arg) + L-arginine + ATP = L-arginyl-tRNA(Arg) + AMP + diphosphate. In Burkholderia lata (strain ATCC 17760 / DSM 23089 / LMG 22485 / NCIMB 9086 / R18194 / 383), this protein is Arginine--tRNA ligase.